Here is a 521-residue protein sequence, read N- to C-terminus: uncharacterized protein (521 aa).

Residues 1–25 are disordered; it reads MLQRSLGVNGRKLAMSARSAKRERK. A run of 6 helical transmembrane segments spans residues 68 to 88, 114 to 134, 160 to 180, 192 to 212, 290 to 310, and 399 to 419; these read GAVW…GAVL, VLIV…SLTV, VVLA…HTVG, VAVT…IYFL, ALLV…GWCW, and LLFW…CAQI.

The protein resides in the cell membrane. This is an uncharacterized protein from Mycobacterium tuberculosis (strain CDC 1551 / Oshkosh).